The chain runs to 534 residues: Cytochrome P450 714B1 (534 aa).

A topological domain (lumenal) is located at residue Met-1. The helical; Signal-anchor for type III membrane protein transmembrane segment at 2–22 threads the bilayer; it reads VVVVAAAMAAASLCCGVAAYL. Over 23–534 the chain is Cytoplasmic; that stretch reads YYVLWLAPER…RSKCDWAGFD (512 aa). Heme is bound at residue Cys-472.

Belongs to the cytochrome P450 family. It depends on heme as a cofactor. As to expression, highly expressed in spikelet and uppermost internode. Detected in shoots, roots, leaves and anthers.

The protein localises to the membrane. Catalyzes the 13-hydroxylation of gibberellins (GAs). Determines the ratio of GA4 and GA1. Converts GA12 into GA53. The chain is Cytochrome P450 714B1 (CYP714B1) from Oryza sativa subsp. japonica (Rice).